We begin with the raw amino-acid sequence, 306 residues long: MASTHSSLTTVQNNANNKSNRTLNTERRLSMESSVFTLYNKAADELDTSQRSAFQACHREFLAEFIGTVILVLLTCGFCAEQTLHIEESKSWLTSSFGSGLSVLIGICVSGHVSGAHLNPAVTIAFCIFSGFPIRKVPSYITAQLLGAFAGAALLYIIIEPAIVQFDGGQRYILGEKSTAGIFGTYPPLYVGIGSAIASEIMGTAMLLLVIMVTGHPNNLPYKSAQGAMIALGITTISLCIGYTSGFSLNPARDFGPRLFTAIAGWGFDVFKVYHYYALVPMFAPILGGLVGLMLMMPFSFLSVRA.

The span at 1-23 shows a compositional bias: polar residues; the sequence is MASTHSSLTTVQNNANNKSNRTL. Residues 1–24 form a disordered region; sequence MASTHSSLTTVQNNANNKSNRTLN. Over 1 to 59 the chain is Cytoplasmic; sequence MASTHSSLTTVQNNANNKSNRTLNTERRLSMESSVFTLYNKAADELDTSQRSAFQACHR. A helical membrane pass occupies residues 60–80; the sequence is EFLAEFIGTVILVLLTCGFCA. The Extracellular portion of the chain corresponds to 81–92; the sequence is EQTLHIEESKSW. A helical transmembrane segment spans residues 93 to 113; it reads LTSSFGSGLSVLIGICVSGHV. Topologically, residues 114 to 145 are cytoplasmic; sequence SGAHLNPAVTIAFCIFSGFPIRKVPSYITAQL. An NPA 1 motif is present at residues 119-121; the sequence is NPA. Residues 146-166 traverse the membrane as a helical segment; the sequence is LGAFAGAALLYIIIEPAIVQF. Residues 167–192 are Extracellular-facing; sequence DGGQRYILGEKSTAGIFGTYPPLYVG. The chain crosses the membrane as a helical span at residues 193 to 213; it reads IGSAIASEIMGTAMLLLVIMV. Over 214–226 the chain is Cytoplasmic; it reads TGHPNNLPYKSAQ. Residues 227-247 form a helical membrane-spanning segment; the sequence is GAMIALGITTISLCIGYTSGF. The Extracellular portion of the chain corresponds to 248-278; that stretch reads SLNPARDFGPRLFTAIAGWGFDVFKVYHYYA. The short motif at 250–252 is the NPA 2 element; it reads NPA. A helical transmembrane segment spans residues 279–299; that stretch reads LVPMFAPILGGLVGLMLMMPF. The Cytoplasmic segment spans residues 300–306; that stretch reads SFLSVRA.

It belongs to the MIP/aquaporin (TC 1.A.8) family.

Its subcellular location is the cell membrane. It catalyses the reaction H2O(in) = H2O(out). Water channel required to facilitate the transport of water across membranes. Contributes to water uptake of spores during the early stages of spore germination. Aquaporins AQP1 and AQP2 act as extracellular pH sensors and enable the spores to hydrate under favorable conditions and to commence germination. Wounded vegetables and fruit present acidic pH, so the optimal pH range for germination is adapted to the relevant host pH. This Rhizopus delemar (strain RA 99-880 / ATCC MYA-4621 / FGSC 9543 / NRRL 43880) (Mucormycosis agent) protein is Aquaporin-1.